The primary structure comprises 189 residues: Ribonuclease HII (189 aa).

Positions 1 to 189 (MIAGVDEAGR…IAALLKNNKK (189 aa)) constitute an RNase H type-2 domain. Residues aspartate 6, glutamate 7, and aspartate 98 each contribute to the a divalent metal cation site.

It belongs to the RNase HII family. It depends on Mn(2+) as a cofactor. The cofactor is Mg(2+).

It localises to the cytoplasm. It catalyses the reaction Endonucleolytic cleavage to 5'-phosphomonoester.. In terms of biological role, endonuclease that specifically degrades the RNA of RNA-DNA hybrids. The protein is Ribonuclease HII of Dichelobacter nodosus (strain VCS1703A).